We begin with the raw amino-acid sequence, 535 residues long: Sucrose transport protein SUT5 (535 aa).

At Met1–Arg53 the chain is on the cytoplasmic side. The helical transmembrane segment at Leu54 to Leu74 threads the bilayer. Residues Leu75 to Ser87 are Extracellular-facing. A helical membrane pass occupies residues Tyr88–Gly108. At Tyr109–Arg122 the chain is on the cytoplasmic side. Residues Pro123–Ala143 traverse the membrane as a helical segment. Topologically, residues Asp144–Arg163 are extracellular. The helical transmembrane segment at Trp164–Val184 threads the bilayer. Residues Gln185–Asn203 lie on the Cytoplasmic side of the membrane. Residues Val204 to Gly224 form a helical membrane-spanning segment. Residues Ala225 to Lys249 are Extracellular-facing. A helical transmembrane segment spans residues Gly250 to Ala270. Residues Asp271 to Pro302 lie on the Cytoplasmic side of the membrane. Residues Pro303–Ile323 form a helical membrane-spanning segment. Over Gln324–Arg354 the chain is Extracellular. A helical membrane pass occupies residues Glu355–Pro375. Over Lys376 to Lys384 the chain is Cytoplasmic. The chain crosses the membrane as a helical span at residues Val385–Gly405. At Met406–Ala429 the chain is on the extracellular side. Residues Val430–Trp450 form a helical membrane-spanning segment. Residues Ala451–Gly465 are Cytoplasmic-facing. A helical membrane pass occupies residues Leu466 to Ala486. Residues Gly487–Thr498 are Extracellular-facing. A helical membrane pass occupies residues Pro499–Leu519. Residues Pro520–His535 lie on the Cytoplasmic side of the membrane.

The protein belongs to the glycoside-pentoside-hexuronide (GPH) cation symporter transporter (TC 2.A.2.4) family. In terms of assembly, homodimer.

It is found in the cell membrane. It participates in glycan biosynthesis; sucrose metabolism. In terms of biological role, responsible for the transport of sucrose into the cell, with the concomitant uptake of protons (symport system). May also transport other glucosides. In Oryza sativa subsp. indica (Rice), this protein is Sucrose transport protein SUT5 (SUT5).